Consider the following 202-residue polypeptide: Protein DCV1 (202 aa).

Positions 1 to 18 are cleaved as a signal peptide; sequence MLNYKLILLFSSFLQLIS. Helical transmembrane passes span 91 to 107, 137 to 155, and 168 to 189; these read IGGL…LTFI, ILTL…LLCM, and LVWL…FLSF.

The protein resides in the membrane. This chain is Protein DCV1 (DCV1), found in Saccharomyces cerevisiae (strain ATCC 204508 / S288c) (Baker's yeast).